The sequence spans 704 residues: Polyribonucleotide nucleotidyltransferase (704 aa).

The Mg(2+) site is built by D488 and D494. The KH domain maps to 555-614 (PRITTIKINPEKIRDVIGKGGATIRALTEETGTTIELDDDGTVKIASSNGEATKEAIRRI). One can recognise an S1 motif domain in the interval 624-692 (GTVYNGKVVR…RQGRVRLSMK (69 aa)).

The protein belongs to the polyribonucleotide nucleotidyltransferase family. As to quaternary structure, component of the RNA degradosome, which is a multiprotein complex involved in RNA processing and mRNA degradation. Requires Mg(2+) as cofactor.

Its subcellular location is the cytoplasm. The enzyme catalyses RNA(n+1) + phosphate = RNA(n) + a ribonucleoside 5'-diphosphate. Its function is as follows. Involved in mRNA degradation. Catalyzes the phosphorolysis of single-stranded polyribonucleotides processively in the 3'- to 5'-direction. This is Polyribonucleotide nucleotidyltransferase from Shewanella pealeana (strain ATCC 700345 / ANG-SQ1).